A 37-amino-acid chain; its full sequence is Large ribosomal subunit protein bL36c (37 aa).

Belongs to the bacterial ribosomal protein bL36 family.

The protein localises to the plastid. The sequence is that of Large ribosomal subunit protein bL36c (rpl36) from Euglena longa (Euglenophycean alga).